A 510-amino-acid polypeptide reads, in one-letter code: ATP synthase subunit alpha (510 aa).

Position 169–176 (169–176) interacts with ATP; it reads GDRQTGKT.

The protein belongs to the ATPase alpha/beta chains family. In terms of assembly, F-type ATPases have 2 components, CF(1) - the catalytic core - and CF(0) - the membrane proton channel. CF(1) has five subunits: alpha(3), beta(3), gamma(1), delta(1), epsilon(1). CF(0) has three main subunits: a(1), b(2) and c(9-12). The alpha and beta chains form an alternating ring which encloses part of the gamma chain. CF(1) is attached to CF(0) by a central stalk formed by the gamma and epsilon chains, while a peripheral stalk is formed by the delta and b chains.

The protein localises to the cell inner membrane. The enzyme catalyses ATP + H2O + 4 H(+)(in) = ADP + phosphate + 5 H(+)(out). Functionally, produces ATP from ADP in the presence of a proton gradient across the membrane. The alpha chain is a regulatory subunit. The chain is ATP synthase subunit alpha from Azorhizobium caulinodans (strain ATCC 43989 / DSM 5975 / JCM 20966 / LMG 6465 / NBRC 14845 / NCIMB 13405 / ORS 571).